Reading from the N-terminus, the 279-residue chain is 3-methyl-2-oxobutanoate hydroxymethyltransferase (279 aa).

Residues Asp43 and Asp82 each contribute to the Mg(2+) site. Residues 43-44, Asp82, and Lys112 each bind 3-methyl-2-oxobutanoate; that span reads DS. Residue Glu114 participates in Mg(2+) binding. Glu181 serves as the catalytic Proton acceptor.

The protein belongs to the PanB family. As to quaternary structure, homodecamer; pentamer of dimers. Mg(2+) is required as a cofactor.

The protein localises to the cytoplasm. The enzyme catalyses 3-methyl-2-oxobutanoate + (6R)-5,10-methylene-5,6,7,8-tetrahydrofolate + H2O = 2-dehydropantoate + (6S)-5,6,7,8-tetrahydrofolate. Its pathway is cofactor biosynthesis; (R)-pantothenate biosynthesis; (R)-pantoate from 3-methyl-2-oxobutanoate: step 1/2. Its function is as follows. Catalyzes the reversible reaction in which hydroxymethyl group from 5,10-methylenetetrahydrofolate is transferred onto alpha-ketoisovalerate to form ketopantoate. This chain is 3-methyl-2-oxobutanoate hydroxymethyltransferase, found in Halalkalibacterium halodurans (strain ATCC BAA-125 / DSM 18197 / FERM 7344 / JCM 9153 / C-125) (Bacillus halodurans).